The following is a 147-amino-acid chain: 3-dehydroquinate dehydratase (147 aa).

Tyr23 acts as the Proton acceptor in catalysis. Asn74, His80, and Asp87 together coordinate substrate. His100 acts as the Proton donor in catalysis. Substrate is bound by residues 101–102 (LS) and Arg111.

It belongs to the type-II 3-dehydroquinase family. As to quaternary structure, homododecamer.

The catalysed reaction is 3-dehydroquinate = 3-dehydroshikimate + H2O. It functions in the pathway metabolic intermediate biosynthesis; chorismate biosynthesis; chorismate from D-erythrose 4-phosphate and phosphoenolpyruvate: step 3/7. Catalyzes a trans-dehydration via an enolate intermediate. The sequence is that of 3-dehydroquinate dehydratase from Clostridium botulinum (strain Kyoto / Type A2).